The following is a 361-amino-acid chain: Histidinol-phosphate aminotransferase (361 aa).

K218 carries the N6-(pyridoxal phosphate)lysine modification.

It belongs to the class-II pyridoxal-phosphate-dependent aminotransferase family. Histidinol-phosphate aminotransferase subfamily. Homodimer. Requires pyridoxal 5'-phosphate as cofactor.

The catalysed reaction is L-histidinol phosphate + 2-oxoglutarate = 3-(imidazol-4-yl)-2-oxopropyl phosphate + L-glutamate. It participates in amino-acid biosynthesis; L-histidine biosynthesis; L-histidine from 5-phospho-alpha-D-ribose 1-diphosphate: step 7/9. This Dinoroseobacter shibae (strain DSM 16493 / NCIMB 14021 / DFL 12) protein is Histidinol-phosphate aminotransferase.